A 337-amino-acid polypeptide reads, in one-letter code: GTP 3',8-cyclase (337 aa).

Residues 17 to 243 (PFQRQYYYLR…HKSHTDGPAK (227 aa)) enclose the Radical SAM core domain. R26 serves as a coordination point for GTP. Residues C33 and C37 each contribute to the [4Fe-4S] cluster site. Residue Y39 participates in S-adenosyl-L-methionine binding. A [4Fe-4S] cluster-binding site is contributed by C40. R76 provides a ligand contact to GTP. Residue G80 coordinates S-adenosyl-L-methionine. T107 contacts GTP. Position 131 (S131) interacts with S-adenosyl-L-methionine. K168 is a binding site for GTP. M202 is an S-adenosyl-L-methionine binding site. Residues C265 and C268 each coordinate [4Fe-4S] cluster. GTP is bound at residue 270-272 (RLR). C282 serves as a coordination point for [4Fe-4S] cluster.

Belongs to the radical SAM superfamily. MoaA family. In terms of assembly, monomer and homodimer. The cofactor is [4Fe-4S] cluster.

The catalysed reaction is GTP + AH2 + S-adenosyl-L-methionine = (8S)-3',8-cyclo-7,8-dihydroguanosine 5'-triphosphate + 5'-deoxyadenosine + L-methionine + A + H(+). Its pathway is cofactor biosynthesis; molybdopterin biosynthesis. Catalyzes the cyclization of GTP to (8S)-3',8-cyclo-7,8-dihydroguanosine 5'-triphosphate. The chain is GTP 3',8-cyclase from Haemophilus influenzae (strain ATCC 51907 / DSM 11121 / KW20 / Rd).